Consider the following 817-residue polypeptide: Anaphase-promoting complex subunit 4 (817 aa).

A Phosphotyrosine modification is found at tyrosine 469. Phosphoserine occurs at positions 757 and 758. Lysine 772 participates in a covalent cross-link: Glycyl lysine isopeptide (Lys-Gly) (interchain with G-Cter in SUMO2). Serine 777 and serine 779 each carry phosphoserine. Lysine 798 participates in a covalent cross-link: Glycyl lysine isopeptide (Lys-Gly) (interchain with G-Cter in SUMO2).

Belongs to the APC4 family. In terms of assembly, the mammalian APC/C is composed at least of 14 distinct subunits ANAPC1, ANAPC2, CDC27/APC3, ANAPC4, ANAPC5, CDC16/APC6, ANAPC7, CDC23/APC8, ANAPC10, ANAPC11, CDC26/APC12, ANAPC13, ANAPC15 and ANAPC16 that assemble into a complex of at least 19 chains with a combined molecular mass of around 1.2 MDa; APC/C interacts with FZR1 and FBXO5. In the context of the APC/C complex, directly interacts with UBE2S.

The protein localises to the nucleus. The protein operates within protein modification; protein ubiquitination. Functionally, component of the anaphase promoting complex/cyclosome (APC/C), a cell cycle-regulated E3 ubiquitin ligase that controls progression through mitosis and the G1 phase of the cell cycle. The APC/C complex acts by mediating ubiquitination and subsequent degradation of target proteins: it mainly mediates the formation of 'Lys-11'-linked polyubiquitin chains and, to a lower extent, the formation of 'Lys-48'- and 'Lys-63'-linked polyubiquitin chains. The APC/C complex catalyzes assembly of branched 'Lys-11'-/'Lys-48'-linked branched ubiquitin chains on target proteins. The chain is Anaphase-promoting complex subunit 4 (ANAPC4) from Pongo abelii (Sumatran orangutan).